Here is a 292-residue protein sequence, read N- to C-terminus: Malonyl-[acyl-carrier protein] O-methyltransferase (292 aa).

The protein belongs to the methyltransferase superfamily.

It catalyses the reaction malonyl-[ACP] + S-adenosyl-L-methionine = malonyl-[ACP] methyl ester + S-adenosyl-L-homocysteine. The protein operates within cofactor biosynthesis; biotin biosynthesis. Functionally, converts the free carboxyl group of a malonyl-thioester to its methyl ester by transfer of a methyl group from S-adenosyl-L-methionine (SAM). It allows to synthesize pimeloyl-ACP via the fatty acid synthetic pathway. The sequence is that of Malonyl-[acyl-carrier protein] O-methyltransferase from Alcanivorax borkumensis (strain ATCC 700651 / DSM 11573 / NCIMB 13689 / SK2).